Consider the following 180-residue polypeptide: Ribulose bisphosphate carboxylase small subunit, chloroplastic 2 (180 aa).

The N-terminal 56 residues, 1–56 (MASSVISSAAVATRSNVTQASMVAPFTGLKSSATFPVTKKQNLDITSIASNGGRVS), are a transit peptide targeting the chloroplast.

Belongs to the RuBisCO small chain family. Heterohexadecamer of 8 large and 8 small subunits. In terms of assembly, (Microbial infection) Binds to tobamovirus movement protein; this interaction seems required for viral systemic movement.

It is found in the plastid. Its subcellular location is the chloroplast. The protein localises to the cell junction. The protein resides in the plasmodesma. RuBisCO catalyzes two reactions: the carboxylation of D-ribulose 1,5-bisphosphate, the primary event in carbon dioxide fixation, as well as the oxidative fragmentation of the pentose substrate. Both reactions occur simultaneously and in competition at the same active site. Although the small subunit is not catalytic it is essential for maximal activity. Involved in antiviral defenses. The chain is Ribulose bisphosphate carboxylase small subunit, chloroplastic 2 from Solanum lycopersicum (Tomato).